A 343-amino-acid polypeptide reads, in one-letter code: Thioredoxin domain-containing protein 15 (343 aa).

Residues 1 to 20 form the signal peptide; that stretch reads MQLLCWWQILLWVLGLPARG. The Extracellular segment spans residues 21–304; it reads LEEDSGHTWQ…GPLPSTLVKT (284 aa). The span at 86–95 shows a compositional bias: basic and acidic residues; that stretch reads EDQRSTEAHD. The segment at 86 to 112 is disordered; sequence EDQRSTEAHDGTCSAQGDEDPRCGGRE. Residues 162 to 279 enclose the Thioredoxin domain; sequence ERNVTGLENF…LKIFIFNQTG (118 aa). N-linked (GlcNAc...) asparagine glycans are attached at residues Asn-170, Asn-177, Asn-189, and Asn-276. A helical transmembrane segment spans residues 305 to 325; it reads VDWLLVFSLFFLISFIMYATI. Over 326–343 the chain is Cytoplasmic; that stretch reads RTESIRWLIPGQEQEHAE.

It is found in the cell projection. The protein localises to the cilium membrane. In terms of biological role, acts as a positive regulator of ciliary hedgehog signaling. Required for cilia biogenesis. The chain is Thioredoxin domain-containing protein 15 (Txndc15) from Rattus norvegicus (Rat).